The following is a 201-amino-acid chain: MLPLLKKLYLTFARSSRIIITLVIIDQLSKWWFIDNLRWKPDLMLKFTSFLNMVYTWNYGISFGLMREYYQYSNAIFLITNTIIVCYLYYLMIRSKTIGSFAGYSFVIGGAVGNLIDRFFRGAVFDFIHFHYQNYSFPVFNLADCFITIGVIILIEDYYSTKKVIEEKAKGNYDNAQIEAMAEKIRNTDKGGNDKIASLQN.

2 helical membrane passes run 73-93 and 97-117; these read SNAI…YLMI and TIGS…NLID. Residues Asp126 and Asp144 contribute to the active site. Residues 135-155 traverse the membrane as a helical segment; sequence YSFPVFNLADCFITIGVIILI.

This sequence belongs to the peptidase A8 family.

It localises to the cell inner membrane. The catalysed reaction is Release of signal peptides from bacterial membrane prolipoproteins. Hydrolyzes -Xaa-Yaa-Zaa-|-(S,diacylglyceryl)Cys-, in which Xaa is hydrophobic (preferably Leu), and Yaa (Ala or Ser) and Zaa (Gly or Ala) have small, neutral side chains.. Its pathway is protein modification; lipoprotein biosynthesis (signal peptide cleavage). Its function is as follows. This protein specifically catalyzes the removal of signal peptides from prolipoproteins. In Rickettsia africae (strain ESF-5), this protein is Lipoprotein signal peptidase.